The chain runs to 286 residues: Polyamine aminopropyltransferase (286 aa).

The PABS domain maps to 5-238; it reads TMWHETLHDQ…GIMTFAWATN (234 aa). Position 33 (glutamine 33) interacts with S-methyl-5'-thioadenosine. Spermidine contacts are provided by histidine 64 and aspartate 88. S-methyl-5'-thioadenosine contacts are provided by residues glutamate 108 and 140 to 141; that span reads DG. Aspartate 158 acts as the Proton acceptor in catalysis. 158-161 lines the spermidine pocket; that stretch reads DCTD. An S-methyl-5'-thioadenosine-binding site is contributed by proline 165.

This sequence belongs to the spermidine/spermine synthase family. Homodimer or homotetramer.

The protein resides in the cytoplasm. It carries out the reaction S-adenosyl 3-(methylsulfanyl)propylamine + putrescine = S-methyl-5'-thioadenosine + spermidine + H(+). It participates in amine and polyamine biosynthesis; spermidine biosynthesis; spermidine from putrescine: step 1/1. Its function is as follows. Catalyzes the irreversible transfer of a propylamine group from the amino donor S-adenosylmethioninamine (decarboxy-AdoMet) to putrescine (1,4-diaminobutane) to yield spermidine. The chain is Polyamine aminopropyltransferase from Salmonella paratyphi B (strain ATCC BAA-1250 / SPB7).